Reading from the N-terminus, the 343-residue chain is S-adenosylmethionine:tRNA ribosyltransferase-isomerase (343 aa).

The protein belongs to the QueA family. Monomer.

The protein resides in the cytoplasm. The enzyme catalyses 7-aminomethyl-7-carbaguanosine(34) in tRNA + S-adenosyl-L-methionine = epoxyqueuosine(34) in tRNA + adenine + L-methionine + 2 H(+). The protein operates within tRNA modification; tRNA-queuosine biosynthesis. Its function is as follows. Transfers and isomerizes the ribose moiety from AdoMet to the 7-aminomethyl group of 7-deazaguanine (preQ1-tRNA) to give epoxyqueuosine (oQ-tRNA). In Enterococcus faecalis (strain ATCC 700802 / V583), this protein is S-adenosylmethionine:tRNA ribosyltransferase-isomerase.